The following is a 466-amino-acid chain: Ribulose bisphosphate carboxylase large chain (466 aa).

K5 is subject to N6,N6,N6-trimethyllysine. Residues N114 and T164 each contribute to the substrate site. K166 serves as the catalytic Proton acceptor. Residue K168 participates in substrate binding. Mg(2+) is bound by residues K192, D194, and E195. Position 192 is an N6-carboxylysine (K192). H285 (proton acceptor) is an active-site residue. Residues R286, H318, and S370 each coordinate substrate.

Belongs to the RuBisCO large chain family. Type I subfamily. Heterohexadecamer of 8 large chains and 8 small chains; disulfide-linked. The disulfide link is formed within the large subunit homodimers. The cofactor is Mg(2+). In terms of processing, the disulfide bond which can form in the large chain dimeric partners within the hexadecamer appears to be associated with oxidative stress and protein turnover.

It is found in the plastid. The protein resides in the chloroplast. It catalyses the reaction 2 (2R)-3-phosphoglycerate + 2 H(+) = D-ribulose 1,5-bisphosphate + CO2 + H2O. The enzyme catalyses D-ribulose 1,5-bisphosphate + O2 = 2-phosphoglycolate + (2R)-3-phosphoglycerate + 2 H(+). Functionally, ruBisCO catalyzes two reactions: the carboxylation of D-ribulose 1,5-bisphosphate, the primary event in carbon dioxide fixation, as well as the oxidative fragmentation of the pentose substrate in the photorespiration process. Both reactions occur simultaneously and in competition at the same active site. In Bixa orellana (Lipstick tree), this protein is Ribulose bisphosphate carboxylase large chain.